We begin with the raw amino-acid sequence, 916 residues long: Ubiquitin carboxyl-terminal hydrolase 20 (916 aa).

The UBP-type zinc-finger motif lies at Asp-6–Asp-111. The Zn(2+) site is built by Cys-8, His-10, Cys-30, Cys-33, Cys-43, Cys-48, Cys-53, His-60, His-64, His-70, Cys-83, and Cys-86. Residues Ser-112, Ser-132, and Ser-134 each carry the phosphoserine modification. The region spanning Thr-145–Ser-687 is the USP domain. Catalysis depends on Cys-154, which acts as the Nucleophile. Positions Leu-258–Gly-420 are disordered. Thr-259 carries the phosphothreonine modification. Positions Asp-260–Ser-280 are enriched in basic and acidic residues. At Ser-306 the chain carries Phosphoserine. Over residues Glu-317–Phe-333 the composition is skewed to basic and acidic residues. Residue Ser-369 is modified to Phosphoserine. The residue at position 378 (Thr-378) is a Phosphothreonine. Phosphoserine is present on residues Ser-410 and Ser-415. The active-site Proton acceptor is the His-645. DUSP domains lie at Glu-689–Cys-782 and Ala-791–Val-894.

It belongs to the peptidase C19 family. USP20/USP33 subfamily. Interacts with VHL, leading to its ubiquitination and subsequent degradation. Interacts with CCP110. Interacts with DIO2. Interacts with HIF1A. Interacts with ADRB2. Interacts with USP18. Post-translationally, ubiquitinated via a VHL-dependent pathway for proteasomal degradation.

The protein localises to the cytoplasm. It is found in the endoplasmic reticulum. Its subcellular location is the perinuclear region. The protein resides in the cytoskeleton. It localises to the microtubule organizing center. The protein localises to the centrosome. The catalysed reaction is Thiol-dependent hydrolysis of ester, thioester, amide, peptide and isopeptide bonds formed by the C-terminal Gly of ubiquitin (a 76-residue protein attached to proteins as an intracellular targeting signal).. Deubiquitinating enzyme that plays a role in many cellular processes including autophagy, cellular antiviral response or membrane protein biogenesis. Attenuates TLR4-mediated NF-kappa-B signaling by cooperating with beta-arrestin-2/ARRB2 and inhibiting TRAF6 autoubiquitination. Promotes cellular antiviral responses by deconjugating 'Lys-33' and 'Lys-48'-linked ubiquitination of STING1 leading to its stabilization. Plays an essential role in autophagy induction by regulating the ULK1 stability through deubiquitination of ULK1. Acts as a positive regulator for NF-kappa-B activation by TNF-alpha through deubiquitinating 'Lys-48'-linked polyubiquitination of SQSTM1, leading to its increased stability. Acts as a regulator of G-protein coupled receptor (GPCR) signaling by mediating the deubiquitination beta-2 adrenergic receptor (ADRB2). Plays a central role in ADRB2 recycling and resensitization after prolonged agonist stimulation by constitutively binding ADRB2, mediating deubiquitination of ADRB2 and inhibiting lysosomal trafficking of ADRB2. Upon dissociation, it is probably transferred to the translocated beta-arrestins, possibly leading to beta-arrestins deubiquitination and disengagement from ADRB2. This suggests the existence of a dynamic exchange between the ADRB2 and beta-arrestins. Deubiquitinates DIO2, thereby regulating thyroid hormone regulation. Deubiquitinates HIF1A, leading to stabilize HIF1A and enhance HIF1A-mediated activity. Deubiquitinates MCL1, a pivotal member of the anti-apoptotic Bcl-2 protein family to regulate its stability. Within the endoplasmic reticulum, participates with USP33 in the rescue of post-translationally targeted membrane proteins that are inappropriately ubiquitinated by the cytosolic protein quality control in the cytosol. The polypeptide is Ubiquitin carboxyl-terminal hydrolase 20 (Usp20) (Mus musculus (Mouse)).